The following is a 100-amino-acid chain: Small ribosomal subunit protein bS20 (100 aa).

The segment at 79-100 (AAHQKSRLSAAVKQAIEPAPST) is disordered.

This sequence belongs to the bacterial ribosomal protein bS20 family.

Functionally, binds directly to 16S ribosomal RNA. The protein is Small ribosomal subunit protein bS20 of Prochlorococcus marinus (strain MIT 9303).